The primary structure comprises 366 residues: DNA integrity scanning protein DisA (366 aa).

The DAC domain occupies 21–159 (VHTLKGTLQR…EGKAHMLEQP (139 aa)). ATP contacts are provided by residues Gly88, Leu106, and 119 to 123 (TRHRS).

This sequence belongs to the DisA family. In terms of assembly, homooctamer. Mg(2+) is required as a cofactor.

The enzyme catalyses 2 ATP = 3',3'-c-di-AMP + 2 diphosphate. In terms of biological role, participates in a DNA-damage check-point. DisA forms globular foci that rapidly scan along the chromosomes searching for lesions. Its function is as follows. Also has diadenylate cyclase activity, catalyzing the condensation of 2 ATP molecules into cyclic di-AMP (c-di-AMP). c-di-AMP likely acts as a signaling molecule that may couple DNA integrity with a cellular process. The chain is DNA integrity scanning protein DisA from Corynebacterium glutamicum (strain R).